Reading from the N-terminus, the 283-residue chain is Shikimate dehydrogenase (NADP(+)) (283 aa).

Shikimate is bound by residues 16–18 and T63; that span reads SLS. The active-site Proton acceptor is the K67. D79 is an NADP(+) binding site. Shikimate-binding residues include N88 and D103. NADP(+)-binding positions include 128-132, A223, and G243; that span reads GAGGA.

The protein belongs to the shikimate dehydrogenase family. In terms of assembly, homodimer.

The enzyme catalyses shikimate + NADP(+) = 3-dehydroshikimate + NADPH + H(+). The protein operates within metabolic intermediate biosynthesis; chorismate biosynthesis; chorismate from D-erythrose 4-phosphate and phosphoenolpyruvate: step 4/7. Involved in the biosynthesis of the chorismate, which leads to the biosynthesis of aromatic amino acids. Catalyzes the reversible NADPH linked reduction of 3-dehydroshikimate (DHSA) to yield shikimate (SA). The protein is Shikimate dehydrogenase (NADP(+)) of Xanthomonas campestris pv. campestris (strain B100).